A 141-amino-acid polypeptide reads, in one-letter code: Large ribosomal subunit protein uL11 (141 aa).

This sequence belongs to the universal ribosomal protein uL11 family. As to quaternary structure, part of the ribosomal stalk of the 50S ribosomal subunit. Interacts with L10 and the large rRNA to form the base of the stalk. L10 forms an elongated spine to which L12 dimers bind in a sequential fashion forming a multimeric L10(L12)X complex. One or more lysine residues are methylated.

Forms part of the ribosomal stalk which helps the ribosome interact with GTP-bound translation factors. The sequence is that of Large ribosomal subunit protein uL11 from Lacticaseibacillus casei (strain BL23) (Lactobacillus casei).